A 362-amino-acid chain; its full sequence is L-asparaginase 2-1 (362 aa).

Residues 1 to 25 form the signal peptide; sequence MRSLNTLLLSLFVAMSSGAPLLKIR. The N-linked (GlcNAc...) asparagine glycan is linked to asparagine 29. Residues 33–359 form the Asparaginase/glutaminase domain; that stretch reads PSIKIFGTGG…DQIRSVFSGV (327 aa). Threonine 43 serves as the catalytic O-isoaspartyl threonine intermediate. Serine 89 contributes to the substrate binding site. N-linked (GlcNAc...) asparagine glycosylation occurs at asparagine 93. Substrate is bound at residue 122–123; sequence TD. N-linked (GlcNAc...) asparagine glycosylation is present at asparagine 239.

Belongs to the asparaginase 1 family.

Its subcellular location is the secreted. The protein localises to the periplasm. The catalysed reaction is L-asparagine + H2O = L-aspartate + NH4(+). This chain is L-asparaginase 2-1 (ASP3-1), found in Saccharomyces cerevisiae (strain ATCC 204508 / S288c) (Baker's yeast).